An 891-amino-acid chain; its full sequence is MDDDQQFCLRWNNHQSTLISVFDTLLENETLVDCTLAAEGKFLKAHKVVLSACSPYFATLLQEQYDKHPIFILKDVKYQELRAMMDYMYRGEVNISQDQLAALLKAAESLQIKGLSDNRTGGGVAPKPESSGHHRGGKLSGAYTLEQTKRARLATGGAMDTSGDVSGSREGSSSPSRRRRKVRRRSMENDAHDNSNSSVLQAAASNQSILQQTGAGLAVSALVTTQLSSGPAAGTSSQASSTQQQQPLTSTNVTKKTESAKLTSSTAAPASGASASAAVQQAHLHQQQAQTTSDAINTENVQAQSQGGAQGVQGDDEDIDEGSAVGGPNSATGPNPASASASAVHAGVVVKQLASVVDKSSSNHKHKIKDNSVSSVGSEMVIEPKAEYDDDAHDENVEDLTLDEEDMTMEELDQTAGTSQGGEGSSQTYATWQHDRSQDELGLMAQDAQQRDPQDLSRKENTAPDVASTAEIQRSFQRSILNGKQRDEQKIQLPGSRRKRLSVTEVSDMLFEFYKTKSAKVPKAEQPHRQVSPTSGEILDPSTISAIAVYGTASETASKNLNADEVMRVQNATATRVVGAAAGAAASFHPRPKYTLKTAASSTEHTTAIPTSVLVANSAAALTPKPQAAVIAEALMRNGLHNFQQQLRAQEILRQQTPHRRIKEENDVEIAGGDITPTKILENLLRKQQERDLRHSECENEPGYSTEDDEEGRYHAFDDIHLMEQSGGKFGNNSGMGMFNANAHGGSASSILDAHQAFRNLEFTLSDYGGSSSNGSTTSPNGIGLDGEPVYECRHCGKKYRWKSTLRRHENVECGGKEPSHQCPYCPYKSKQRGNLGVHVRKHHTDLPQLPSKRRSKYSMNRENGMSGSMSDDSQGKLIIDFNGKGELETK.

Positions 32–97 (VDCTLAAEGK…MYRGEVNISQ (66 aa)) constitute a BTB domain. Disordered regions lie at residues 115 to 200 (LSDN…SSVL) and 228 to 340 (SSGP…ASAS). The residue at position 140 (serine 140) is a Phosphoserine. Threonine 161 is modified (phosphothreonine). Phosphoserine is present on residues serine 162 and serine 168. Composition is skewed to low complexity over residues 162–175 (SGDV…SSSP), 228–251 (SSGP…LTST), 263–293 (TSST…QTTS), and 329–340 (NSATGPNPASAS). Serine 372, serine 375, and serine 378 each carry phosphoserine. The tract at residues 446–467 (QDAQQRDPQDLSRKENTAPDVA) is disordered. Basic and acidic residues predominate over residues 449-462 (QQRDPQDLSRKENT). A phosphoserine mark is found at serine 696 and serine 705. Threonine 706 carries the post-translational modification Phosphothreonine. Serine 749 and serine 750 each carry phosphoserine. The C2H2-type 1; degenerate zinc finger occupies 791–813 (YECRHCGKKYRWKSTLRRHENVE). Residues 821-843 (HQCPYCPYKSKQRGNLGVHVRKH) form a C2H2-type 2 zinc finger. The segment at 840-891 (VRKHHTDLPQLPSKRRSKYSMNRENGMSGSMSDDSQGKLIIDFNGKGELETK) is disordered. Serine 874 is subject to Phosphoserine.

As to expression, expressed in both mesoderm and ectoderm with expression highest in the mesectoderm by stage 11. Becomes enriched in a cluster of brain cells, in abdominal histoblasts, and in the embryonic imaginal disks during later stages.

The protein localises to the nucleus. Putative transcription factor required for axon growth and guidance in the central and peripheral nervous systems. Repels CNS axons away from the midline by promoting the expression of the midline repellent sli and its receptor robo. In Drosophila melanogaster (Fruit fly), this protein is Longitudinals lacking protein, isoform G.